A 423-amino-acid chain; its full sequence is Putative competence-damage inducible protein (423 aa).

It belongs to the CinA family.

The protein is Putative competence-damage inducible protein of Streptococcus thermophilus (strain ATCC BAA-491 / LMD-9).